The sequence spans 602 residues: DNA mismatch repair protein MutL (602 aa).

This sequence belongs to the DNA mismatch repair MutL/HexB family.

Functionally, this protein is involved in the repair of mismatches in DNA. It is required for dam-dependent methyl-directed DNA mismatch repair. May act as a 'molecular matchmaker', a protein that promotes the formation of a stable complex between two or more DNA-binding proteins in an ATP-dependent manner without itself being part of a final effector complex. This chain is DNA mismatch repair protein MutL, found in Geotalea uraniireducens (strain Rf4) (Geobacter uraniireducens).